A 388-amino-acid chain; its full sequence is Glycoprotein-N-acetylgalactosamine 3-beta-galactosyltransferase 1 (388 aa).

Over 1–12 (MAPISHYIGKTS) the chain is Cytoplasmic. The chain crosses the membrane as a helical; Signal-anchor for type II membrane protein span at residues 13-30 (LTTLAIGIAIGITVSNIV). At 31–388 (KFSSTQRRHF…LAQTDSKHIS (358 aa)) the chain is on the lumenal side. A disordered region spans residues 43 to 65 (SGYIPDSPHSHGENDFVEGPDDS). N-linked (GlcNAc...) asparagine glycosylation occurs at Asn-80. Cys-95 and Cys-119 are disulfide-bonded. The UDP site is built by Met-98, Asn-100, Glu-142, Gly-143, Arg-144, Lys-150, and Asp-173. Mn(2+) is bound by residues Asp-173 and Asp-175. Cys-238 and Cys-253 are joined by a disulfide. Residue Trp-292 coordinates a glycoprotein. A disulfide bond links Cys-307 and Cys-308. Residues His-316 and Tyr-317 each coordinate UDP. Mn(2+) is bound at residue His-316. Residues 344–388 (STEEQDHGSSHKDTDAMKPEGKGMEDKEDEETNISLAQTDSKHIS) are disordered. A compositionally biased stretch (basic and acidic residues) spans 347–368 (EQDHGSSHKDTDAMKPEGKGME). N-linked (GlcNAc...) asparagine glycosylation is present at Asn-376.

The protein belongs to the glycosyltransferase 31 family. Beta3-Gal-T subfamily. As to quaternary structure, homodimer; disulfide-linked. Mn(2+) is required as a cofactor.

It localises to the membrane. It carries out the reaction an N-acetyl-alpha-D-galactosaminyl derivative + UDP-alpha-D-galactose = a beta-D-galactosyl-(1-&gt;3)-N-acetyl-alpha-D-galactosaminyl derivative + UDP + H(+). It functions in the pathway protein modification; protein glycosylation. Glycosyltransferase that generates the core 1 O-glycan Gal-beta1-3GalNAc-alpha1-Ser/Thr (T antigen), which is a precursor for many extended O-glycans in glycoproteins. The protein is Glycoprotein-N-acetylgalactosamine 3-beta-galactosyltransferase 1 of Biomphalaria glabrata (Bloodfluke planorb).